The sequence spans 610 residues: UvrABC system protein C (610 aa).

Positions 16–94 (SQPGVYRMYD…IKLYQPRYNV (79 aa)) constitute a GIY-YIG domain. Residues 204-239 (DQVLTQLIARMEKASQDLAFEEAARIRDQIQAVRRV) enclose the UVR domain.

This sequence belongs to the UvrC family. Interacts with UvrB in an incision complex.

Its subcellular location is the cytoplasm. Its function is as follows. The UvrABC repair system catalyzes the recognition and processing of DNA lesions. UvrC both incises the 5' and 3' sides of the lesion. The N-terminal half is responsible for the 3' incision and the C-terminal half is responsible for the 5' incision. In Salmonella typhi, this protein is UvrABC system protein C.